The chain runs to 393 residues: Probable acetyl-CoA acyltransferase (393 aa).

The active-site Acyl-thioester intermediate is cysteine 88. Catalysis depends on proton acceptor residues histidine 349 and cysteine 378.

This sequence belongs to the thiolase-like superfamily. Thiolase family.

Its subcellular location is the cytoplasm. It carries out the reaction 2 acetyl-CoA = acetoacetyl-CoA + CoA. In Staphylococcus aureus (strain MSSA476), this protein is Probable acetyl-CoA acyltransferase.